The following is a 398-amino-acid chain: Lipoyl synthase, mitochondrial (398 aa).

A mitochondrion-targeting transit peptide spans 1-32; it reads MIALRVHNTRVVSRSLTVWTRPSPTLTLSRSL. [4Fe-4S] cluster-binding residues include Cys-117, Cys-122, Cys-128, Cys-147, Cys-151, Cys-154, and Ser-362. The Radical SAM core domain maps to 132–351; the sequence is KKSEATATIM…RDTALEMGFL (220 aa).

This sequence belongs to the radical SAM superfamily. Lipoyl synthase family. [4Fe-4S] cluster is required as a cofactor.

The protein resides in the mitochondrion. It catalyses the reaction [[Fe-S] cluster scaffold protein carrying a second [4Fe-4S](2+) cluster] + N(6)-octanoyl-L-lysyl-[protein] + 2 oxidized [2Fe-2S]-[ferredoxin] + 2 S-adenosyl-L-methionine + 4 H(+) = [[Fe-S] cluster scaffold protein] + N(6)-[(R)-dihydrolipoyl]-L-lysyl-[protein] + 4 Fe(3+) + 2 hydrogen sulfide + 2 5'-deoxyadenosine + 2 L-methionine + 2 reduced [2Fe-2S]-[ferredoxin]. It functions in the pathway protein modification; protein lipoylation via endogenous pathway; protein N(6)-(lipoyl)lysine from octanoyl-[acyl-carrier-protein]: step 2/2. Catalyzes the radical-mediated insertion of two sulfur atoms into the C-6 and C-8 positions of the octanoyl moiety bound to the lipoyl domains of lipoate-dependent enzymes, thereby converting the octanoylated domains into lipoylated derivatives. The chain is Lipoyl synthase, mitochondrial from Scheffersomyces stipitis (strain ATCC 58785 / CBS 6054 / NBRC 10063 / NRRL Y-11545) (Yeast).